Consider the following 599-residue polypeptide: Proline dehydrogenase 1, mitochondrial (599 aa).

Disordered regions lie at residues Ser-20–Cys-39 and Glu-152–Tyr-180. Residues Pro-23 to Cys-39 are compositionally biased toward low complexity. The segment covering Glu-153–Tyr-180 has biased composition (basic and acidic residues). Residues Lys-356, Lys-367, and Lys-485 each carry the N6-acetyllysine modification.

This sequence belongs to the proline oxidase family. It depends on FAD as a cofactor. As to expression, expressed in liver, kidney, heart and to a lesser extent in brain, lung and muscle.

The protein localises to the mitochondrion matrix. It catalyses the reaction L-proline + a quinone = (S)-1-pyrroline-5-carboxylate + a quinol + H(+). The protein operates within amino-acid degradation; L-proline degradation into L-glutamate; L-glutamate from L-proline: step 1/2. Its function is as follows. Converts proline to delta-1-pyrroline-5-carboxylate. The sequence is that of Proline dehydrogenase 1, mitochondrial (Prodh) from Mus musculus (Mouse).